The following is a 318-amino-acid chain: Biotin synthase (318 aa).

Positions 46–272 (DGVDVEQLNN…RSVVKISGGR (227 aa)) constitute a Radical SAM core domain. Positions 61, 65, and 68 each coordinate [4Fe-4S] cluster. Positions 105, 138, 197, and 267 each coordinate [2Fe-2S] cluster.

It belongs to the radical SAM superfamily. Biotin synthase family. Homodimer. Requires [4Fe-4S] cluster as cofactor. [2Fe-2S] cluster serves as cofactor.

It carries out the reaction (4R,5S)-dethiobiotin + (sulfur carrier)-SH + 2 reduced [2Fe-2S]-[ferredoxin] + 2 S-adenosyl-L-methionine = (sulfur carrier)-H + biotin + 2 5'-deoxyadenosine + 2 L-methionine + 2 oxidized [2Fe-2S]-[ferredoxin]. It functions in the pathway cofactor biosynthesis; biotin biosynthesis; biotin from 7,8-diaminononanoate: step 2/2. Catalyzes the conversion of dethiobiotin (DTB) to biotin by the insertion of a sulfur atom into dethiobiotin via a radical-based mechanism. The polypeptide is Biotin synthase (Cenarchaeum symbiosum (strain A)).